A 475-amino-acid polypeptide reads, in one-letter code: UDP-N-acetylmuramate--L-alanine ligase (475 aa).

114 to 120 (GTHGKTT) provides a ligand contact to ATP.

This sequence belongs to the MurCDEF family.

The protein localises to the cytoplasm. It carries out the reaction UDP-N-acetyl-alpha-D-muramate + L-alanine + ATP = UDP-N-acetyl-alpha-D-muramoyl-L-alanine + ADP + phosphate + H(+). It participates in cell wall biogenesis; peptidoglycan biosynthesis. Functionally, cell wall formation. This is UDP-N-acetylmuramate--L-alanine ligase from Bartonella henselae (strain ATCC 49882 / DSM 28221 / CCUG 30454 / Houston 1) (Rochalimaea henselae).